Reading from the N-terminus, the 183-residue chain is Tumor necrosis factor ligand superfamily member 4 (183 aa).

Residues 1-23 (MERVQPLEENVGNAARPRFERNK) are Cytoplasmic-facing. A helical; Signal-anchor for type II membrane protein transmembrane segment spans residues 24-50 (LLLVASVIQGLGLLLCFTYICLHFSAL). One can recognise a THD domain in the interval 51–173 (QVSHRYPRIQ…HVNGGELILI (123 aa)). The Extracellular portion of the chain corresponds to 51-183 (QVSHRYPRIQ…HQNPGEFCVL (133 aa)). N-linked (GlcNAc...) asparagine glycans are attached at residues Asn-90, Asn-114, Asn-152, and Asn-157. Cys-97 and Cys-181 form a disulfide bridge.

It belongs to the tumor necrosis factor family. Homotrimer.

Its subcellular location is the membrane. Cytokine that binds to TNFRSF4. Co-stimulates T-cell proliferation and cytokine production. The chain is Tumor necrosis factor ligand superfamily member 4 (TNFSF4) from Homo sapiens (Human).